The sequence spans 601 residues: Elongation factor 4 (601 aa).

Residues 7–189 (KHTRNFSIVA…AIVEKVPVPD (183 aa)) form the tr-type G domain. GTP-binding positions include 19-24 (DHGKST) and 136-139 (NKID).

The protein belongs to the TRAFAC class translation factor GTPase superfamily. Classic translation factor GTPase family. LepA subfamily.

It is found in the cell membrane. The enzyme catalyses GTP + H2O = GDP + phosphate + H(+). Functionally, required for accurate and efficient protein synthesis under certain stress conditions. May act as a fidelity factor of the translation reaction, by catalyzing a one-codon backward translocation of tRNAs on improperly translocated ribosomes. Back-translocation proceeds from a post-translocation (POST) complex to a pre-translocation (PRE) complex, thus giving elongation factor G a second chance to translocate the tRNAs correctly. Binds to ribosomes in a GTP-dependent manner. This Clostridium novyi (strain NT) protein is Elongation factor 4.